Here is a 524-residue protein sequence, read N- to C-terminus: Cytochrome P450 1A1 (524 aa).

Positions 33-44 are mitochondrial targeting signal; it reads WQPRLPKGLKSP. O-linked (GlcNAc) serine glycosylation is present at Ser71. Position 228 (Phe228) interacts with substrate. Residue Cys461 coordinates heme.

It belongs to the cytochrome P450 family. Interacts with cytosolic chaperones HSP70 and HSP90; this interaction is required for initial targeting to mitochondria. Interacts (via mitochondrial targeting signal) with TOMM40 (via N-terminus); this interaction is required for translocation across the mitochondrial outer membrane. Heme serves as cofactor.

The protein localises to the endoplasmic reticulum membrane. It is found in the mitochondrion inner membrane. The protein resides in the microsome membrane. It localises to the cytoplasm. It carries out the reaction an organic molecule + reduced [NADPH--hemoprotein reductase] + O2 = an alcohol + oxidized [NADPH--hemoprotein reductase] + H2O + H(+). The catalysed reaction is estrone + reduced [NADPH--hemoprotein reductase] + O2 = 2-hydroxyestrone + oxidized [NADPH--hemoprotein reductase] + H2O + H(+). It catalyses the reaction estrone + reduced [NADPH--hemoprotein reductase] + O2 = 4-hydroxyestrone + oxidized [NADPH--hemoprotein reductase] + H2O + H(+). The enzyme catalyses estrone + reduced [NADPH--hemoprotein reductase] + O2 = 6alpha-hydroxyestrone + oxidized [NADPH--hemoprotein reductase] + H2O + H(+). It carries out the reaction estrone + reduced [NADPH--hemoprotein reductase] + O2 = 15alpha-hydroxyestrone + oxidized [NADPH--hemoprotein reductase] + H2O + H(+). The catalysed reaction is estrone + reduced [NADPH--hemoprotein reductase] + O2 = 16alpha-hydroxyestrone + oxidized [NADPH--hemoprotein reductase] + H2O + H(+). It catalyses the reaction 17beta-estradiol + reduced [NADPH--hemoprotein reductase] + O2 = 2-hydroxy-17beta-estradiol + oxidized [NADPH--hemoprotein reductase] + H2O + H(+). The enzyme catalyses 17beta-estradiol + reduced [NADPH--hemoprotein reductase] + O2 = 4-hydroxy-17beta-estradiol + oxidized [NADPH--hemoprotein reductase] + H2O + H(+). It carries out the reaction 17beta-estradiol + reduced [NADPH--hemoprotein reductase] + O2 = 6alpha-hydroxy-17beta-estradiol + oxidized [NADPH--hemoprotein reductase] + H2O + H(+). The catalysed reaction is 17beta-estradiol + reduced [NADPH--hemoprotein reductase] + O2 = 7alpha-hydroxy-17beta-estradiol + oxidized [NADPH--hemoprotein reductase] + H2O + H(+). It catalyses the reaction 17beta-estradiol + reduced [NADPH--hemoprotein reductase] + O2 = 15alpha-hydroxy-17beta-estradiol + oxidized [NADPH--hemoprotein reductase] + H2O + H(+). The enzyme catalyses (5Z,8Z,11Z)-eicosatrienoate + reduced [NADPH--hemoprotein reductase] + O2 = 19-hydroxy-(5Z,8Z,11Z)-eicosatrienoate + oxidized [NADPH--hemoprotein reductase] + H2O + H(+). It carries out the reaction (5Z,8Z,11Z,14Z)-eicosatetraenoate + reduced [NADPH--hemoprotein reductase] + O2 = 16-hydroxy-(5Z,8Z,11Z,14Z)-eicosatetraenoate + oxidized [NADPH--hemoprotein reductase] + H2O + H(+). The catalysed reaction is (5Z,8Z,11Z,14Z)-eicosatetraenoate + reduced [NADPH--hemoprotein reductase] + O2 = 17-hydroxy-(5Z,8Z,11Z,14Z)-eicosatetraenoate + oxidized [NADPH--hemoprotein reductase] + H2O + H(+). It catalyses the reaction (5Z,8Z,11Z,14Z)-eicosatetraenoate + reduced [NADPH--hemoprotein reductase] + O2 = 18-hydroxy-(5Z,8Z,11Z,14Z)-eicosatetraenoate + oxidized [NADPH--hemoprotein reductase] + H2O + H(+). The enzyme catalyses (5Z,8Z,11Z,14Z)-eicosatetraenoate + reduced [NADPH--hemoprotein reductase] + O2 = 19-hydroxy-(5Z,8Z,11Z,14Z)-eicosatetraenoate + oxidized [NADPH--hemoprotein reductase] + H2O + H(+). It carries out the reaction (5Z,8Z,11Z,14Z,17Z)-eicosapentaenoate + reduced [NADPH--hemoprotein reductase] + O2 = 19-hydroxy-(5Z,8Z,11Z,14Z,17Z)-eicosapentaenoate + oxidized [NADPH--hemoprotein reductase] + H2O + H(+). The catalysed reaction is (5Z,8Z,11Z,14Z)-eicosatetraenoate + reduced [NADPH--hemoprotein reductase] + O2 = (8R,9S)-epoxy-(5Z,11Z,14Z)-eicosatrienoate + oxidized [NADPH--hemoprotein reductase] + H2O + H(+). It catalyses the reaction (5Z,8Z,11Z,14Z)-eicosatetraenoate + reduced [NADPH--hemoprotein reductase] + O2 = (11R,12S)-epoxy-(5Z,8Z,14Z)-eicosatrienoate + oxidized [NADPH--hemoprotein reductase] + H2O + H(+). The enzyme catalyses (5Z,8Z,11Z,14Z)-eicosatetraenoate + reduced [NADPH--hemoprotein reductase] + O2 = (14S,15R)-epoxy-(5Z,8Z,11Z)-eicosatrienoate + oxidized [NADPH--hemoprotein reductase] + H2O + H(+). It carries out the reaction (5Z,8Z,11Z,14Z)-eicosatetraenoate + reduced [NADPH--hemoprotein reductase] + O2 = (14R,15S)-epoxy-(5Z,8Z,11Z)-eicosatrienoate + oxidized [NADPH--hemoprotein reductase] + H2O + H(+). The catalysed reaction is (5Z,8Z,11Z,14Z,17Z)-eicosapentaenoate + reduced [NADPH--hemoprotein reductase] + O2 = (17R,18S)-epoxy-(5Z,8Z,11Z,14Z)-eicosatetraenoate + oxidized [NADPH--hemoprotein reductase] + H2O + H(+). It catalyses the reaction (4Z,7Z,10Z,13Z,16Z,19Z)-docosahexaenoate + reduced [NADPH--hemoprotein reductase] + O2 = (19S,20R)-epoxy-(4Z,7Z,10Z,13Z,16Z)-docosapentaenoate + oxidized [NADPH--hemoprotein reductase] + H2O + H(+). The enzyme catalyses (4Z,7Z,10Z,13Z,16Z,19Z)-docosahexaenoate + reduced [NADPH--hemoprotein reductase] + O2 = (19R,20S)-epoxy-(4Z,7Z,10Z,13Z,16Z)-docosapentaenoate + oxidized [NADPH--hemoprotein reductase] + H2O + H(+). It carries out the reaction all-trans-retinol + reduced [NADPH--hemoprotein reductase] + O2 = all-trans-retinal + oxidized [NADPH--hemoprotein reductase] + 2 H2O + H(+). The catalysed reaction is all-trans-retinal + reduced [NADPH--hemoprotein reductase] + O2 = all-trans-retinoate + oxidized [NADPH--hemoprotein reductase] + H2O + 2 H(+). It catalyses the reaction (13S)-hydroperoxy-(9Z,11E)-octadecadienoate = 13-oxo-(9Z,11E)-octadecadienoate + H2O. The enzyme catalyses (12S)-hydroperoxy-(5Z,8Z,10E,14Z)-eicosatetraenoate = 12-oxo-(5Z,8Z,10E,14Z)-eicosatetraenoate + H2O. It carries out the reaction (15S)-hydroperoxy-(5Z,8Z,11Z,13E)-eicosatetraenoate = 15-oxo-(5Z,8Z,11Z,13E)-eicosatetraenoate + H2O. The catalysed reaction is (5S)-hydroperoxy-(6E,8Z,11Z,14Z)-eicosatetraenoate = 5-oxo-(6E,8Z,11Z,14Z)-eicosatetraenoate + H2O. It participates in steroid hormone biosynthesis. It functions in the pathway lipid metabolism; fatty acid metabolism. Its pathway is cofactor metabolism; retinol metabolism. In terms of biological role, a cytochrome P450 monooxygenase involved in the metabolism of various endogenous substrates, including fatty acids, steroid hormones and vitamins. Mechanistically, uses molecular oxygen inserting one oxygen atom into a substrate, and reducing the second into a water molecule, with two electrons provided by NADPH via cytochrome P450 reductase (CPR; NADPH-ferrihemoprotein reductase). Catalyzes the hydroxylation of carbon-hydrogen bonds. Exhibits high catalytic activity for the formation of hydroxyestrogens from estrone (E1) and 17beta-estradiol (E2), namely 2-hydroxy E1 and E2, as well as D-ring hydroxylated E1 and E2 at the C15alpha and C16alpha positions. Displays different regioselectivities for polyunsaturated fatty acids (PUFA) hydroxylation. Catalyzes the epoxidation of double bonds of certain PUFA. Converts arachidonic acid toward epoxyeicosatrienoic acid (EET) regioisomers, 8,9-, 11,12-, and 14,15-EET, that function as lipid mediators in the vascular system. Displays an absolute stereoselectivity in the epoxidation of eicosapentaenoic acid (EPA) producing the 17(R),18(S) enantiomer. May play an important role in all-trans retinoic acid biosynthesis in extrahepatic tissues. Catalyzes two successive oxidative transformation of all-trans retinol to all-trans retinal and then to the active form all-trans retinoic acid. May also participate in eicosanoids metabolism by converting hydroperoxide species into oxo metabolites (lipoxygenase-like reaction, NADPH-independent). In Canis lupus familiaris (Dog), this protein is Cytochrome P450 1A1 (CYP1A1).